A 110-amino-acid polypeptide reads, in one-letter code: Nucleoid-associated protein Ent638_0951 (110 aa).

This sequence belongs to the YbaB/EbfC family. Homodimer.

It is found in the cytoplasm. The protein resides in the nucleoid. Binds to DNA and alters its conformation. May be involved in regulation of gene expression, nucleoid organization and DNA protection. This chain is Nucleoid-associated protein Ent638_0951, found in Enterobacter sp. (strain 638).